The primary structure comprises 202 residues: uncharacterized protein (202 aa).

This is an uncharacterized protein from Methanocaldococcus jannaschii (strain ATCC 43067 / DSM 2661 / JAL-1 / JCM 10045 / NBRC 100440) (Methanococcus jannaschii).